The primary structure comprises 245 residues: tRNA1(Val) (adenine(37)-N6)-methyltransferase (245 aa).

The protein belongs to the methyltransferase superfamily. tRNA (adenine-N(6)-)-methyltransferase family.

It is found in the cytoplasm. It catalyses the reaction adenosine(37) in tRNA1(Val) + S-adenosyl-L-methionine = N(6)-methyladenosine(37) in tRNA1(Val) + S-adenosyl-L-homocysteine + H(+). Its function is as follows. Specifically methylates the adenine in position 37 of tRNA(1)(Val) (anticodon cmo5UAC). This is tRNA1(Val) (adenine(37)-N6)-methyltransferase from Escherichia coli O7:K1 (strain IAI39 / ExPEC).